Reading from the N-terminus, the 156-residue chain is SsrA-binding protein (156 aa).

Basic and acidic residues predominate over residues 135–150 (KRDTIKDREWQRDRSR). Residues 135–156 (KRDTIKDREWQRDRSRIMKKNT) form a disordered region.

The protein belongs to the SmpB family.

Its subcellular location is the cytoplasm. Its function is as follows. Required for rescue of stalled ribosomes mediated by trans-translation. Binds to transfer-messenger RNA (tmRNA), required for stable association of tmRNA with ribosomes. tmRNA and SmpB together mimic tRNA shape, replacing the anticodon stem-loop with SmpB. tmRNA is encoded by the ssrA gene; the 2 termini fold to resemble tRNA(Ala) and it encodes a 'tag peptide', a short internal open reading frame. During trans-translation Ala-aminoacylated tmRNA acts like a tRNA, entering the A-site of stalled ribosomes, displacing the stalled mRNA. The ribosome then switches to translate the ORF on the tmRNA; the nascent peptide is terminated with the 'tag peptide' encoded by the tmRNA and targeted for degradation. The ribosome is freed to recommence translation, which seems to be the essential function of trans-translation. This chain is SsrA-binding protein, found in Legionella pneumophila (strain Corby).